The chain runs to 94 residues: Co-chaperonin GroES (94 aa).

The protein belongs to the GroES chaperonin family. Heptamer of 7 subunits arranged in a ring. Interacts with the chaperonin GroEL.

It is found in the cytoplasm. Functionally, together with the chaperonin GroEL, plays an essential role in assisting protein folding. The GroEL-GroES system forms a nano-cage that allows encapsulation of the non-native substrate proteins and provides a physical environment optimized to promote and accelerate protein folding. GroES binds to the apical surface of the GroEL ring, thereby capping the opening of the GroEL channel. The polypeptide is Co-chaperonin GroES (Geobacillus thermodenitrificans (strain NG80-2)).